A 453-amino-acid polypeptide reads, in one-letter code: Serine/threonine-protein phosphatase 2A regulatory subunit B'' subunit gamma (453 aa).

Positions 1 to 27 (MDWKDVLRRRLASPNSDPKRKKSEQEL) are disordered. EF-hand domains lie at 273–308 (PSALRVYGQYLNLDKDHNGMLSKEELSRYGTATMTN) and 341–376 (KEPAALQYIFKLLDIENKGYLNVFSLNYFFRAIQEL). Ca(2+) contacts are provided by D286, D288, N290, M292, and E297.

In terms of assembly, interacts with MCM3AP/GANP, PPP5C, and the phosphatase 2A core enzyme composed of the PPP2CA catalytic subunit and the constant regulatory subunit PPP2R1A. Finds in a complex with ABCB1, TFPI2 and PPP2R3C; leading to the dephosphorylation of ABCB1.

It localises to the nucleus. The protein resides in the cytoplasm. In terms of biological role, may regulate MCM3AP phosphorylation through phosphatase recruitment. May act as a negative regulator of ABCB1 expression and function through the dephosphorylation of ABCB1 by TFPI2/PPP2R3C complex. May play a role in the activation-induced cell death of B-cells. This chain is Serine/threonine-protein phosphatase 2A regulatory subunit B'' subunit gamma (Ppp2r3c), found in Rattus norvegicus (Rat).